The following is an 873-amino-acid chain: Outer membrane usher protein FimC (873 aa).

The N-terminal stretch at 1–15 (MKQIPLILAMSLAFA) is a signal peptide. A disulfide bridge links cysteine 815 with cysteine 838.

This sequence belongs to the fimbrial export usher family.

Its subcellular location is the cell outer membrane. In terms of biological role, probable porin-like protein necessary for the assembly of a pilin-type protein. In Bordetella pertussis (strain Tohama I / ATCC BAA-589 / NCTC 13251), this protein is Outer membrane usher protein FimC (fimC).